Consider the following 302-residue polypeptide: FeMo cofactor biosynthesis protein NifB (302 aa).

One can recognise a Radical SAM core domain in the interval histidine 22 to arginine 264. The [4Fe-4S] cluster site is built by cysteine 36, cysteine 40, and cysteine 43. S-adenosyl-L-methionine is bound by residues glycine 91, threonine 142, and isoleucine 194. Positions 260 and 263 each coordinate [4Fe-4S] cluster.

Belongs to the radical SAM superfamily. NifB family. As to quaternary structure, monomer. It depends on [4Fe-4S] cluster as a cofactor.

It participates in cofactor biosynthesis; Fe-Mo cofactor biosynthesis. In terms of biological role, involved in the biosynthesis of the iron-molybdenum cofactor (FeMo-co or M-cluster) found in the dinitrogenase enzyme of the nitrogenase complex in nitrogen-fixing microorganisms. NifB catalyzes the crucial step of radical SAM-dependent carbide insertion that occurs concomitant with the insertion of a 9th sulfur and the rearrangement/coupling of two [4Fe-4S] clusters into a [8Fe-9S-C] cluster, the precursor to the M-cluster. This chain is FeMo cofactor biosynthesis protein NifB, found in Methanocaldococcus infernus (strain DSM 11812 / JCM 15783 / ME).